A 324-amino-acid polypeptide reads, in one-letter code: Mevalonate-3-kinase (324 aa).

Leucine 19 provides a ligand contact to substrate. 109-112 (SGSS) lines the ATP pocket. Substrate contacts are provided by glutamate 145 and arginine 149. ATP contacts are provided by arginine 190 and serine 193.

It belongs to the GHMP kinase family. In terms of assembly, homodimer.

It catalyses the reaction (R)-mevalonate + ATP = (R)-3-phosphomevalonate + ADP + H(+). It functions in the pathway isoprenoid biosynthesis; isopentenyl diphosphate biosynthesis via mevalonate pathway. Its function is as follows. Catalyzes the phosphorylation of mevalonate (MVA) to yield mevalonate-3-phosphate. Functions in an alternative mevalonate pathway, which passes through mevalonate 3-phosphate rather than mevalonate 5-phosphate. Also able to catalyze the formation of isobutene via the conversion of 3-hydroxyisovalerate (3-HIV) to an unstable 3-phosphate intermediate that undergoes a spontaneous decarboxylation. The sequence is that of Mevalonate-3-kinase from Picrophilus torridus (strain ATCC 700027 / DSM 9790 / JCM 10055 / NBRC 100828 / KAW 2/3).